A 130-amino-acid polypeptide reads, in one-letter code: Small ribosomal subunit protein uS9 (130 aa).

Belongs to the universal ribosomal protein uS9 family.

The polypeptide is Small ribosomal subunit protein uS9 (Hydrogenovibrio crunogenus (strain DSM 25203 / XCL-2) (Thiomicrospira crunogena)).